We begin with the raw amino-acid sequence, 215 residues long: Cytochrome b6 (215 aa).

Residues Ile32–Phe52 form a helical membrane-spanning segment. Residue Cys35 coordinates heme c. Residues His86 and His100 each coordinate heme b. Helical transmembrane passes span Ala90–Phe110, Leu116–Tyr136, and Leu186–Ile206. His187 and His202 together coordinate heme b.

Belongs to the cytochrome b family. PetB subfamily. The 4 large subunits of the cytochrome b6-f complex are cytochrome b6, subunit IV (17 kDa polypeptide, PetD), cytochrome f and the Rieske protein, while the 4 small subunits are PetG, PetL, PetM and PetN. The complex functions as a dimer. Requires heme b as cofactor. Heme c serves as cofactor.

The protein resides in the plastid. It is found in the chloroplast thylakoid membrane. Its function is as follows. Component of the cytochrome b6-f complex, which mediates electron transfer between photosystem II (PSII) and photosystem I (PSI), cyclic electron flow around PSI, and state transitions. The protein is Cytochrome b6 of Pelargonium hortorum (Common geranium).